A 700-amino-acid chain; its full sequence is Polyribonucleotide nucleotidyltransferase (700 aa).

Mg(2+) contacts are provided by Asp484 and Asp490. Residues 551–610 (PRVIRMVVDPEKIREIIGPGGKTISKIIAETGVKIDIEEDGRLYITASDLRSGERAKQMI) form the KH domain. An S1 motif domain is found at 620–688 (GEIYLGKVLR…KLGRISLSRK (69 aa)).

Belongs to the polyribonucleotide nucleotidyltransferase family. Mg(2+) is required as a cofactor.

The protein localises to the cytoplasm. It carries out the reaction RNA(n+1) + phosphate = RNA(n) + a ribonucleoside 5'-diphosphate. Its function is as follows. Involved in mRNA degradation. Catalyzes the phosphorolysis of single-stranded polyribonucleotides processively in the 3'- to 5'-direction. The chain is Polyribonucleotide nucleotidyltransferase from Thermoanaerobacter sp. (strain X514).